The chain runs to 1143 residues: Disease resistance protein Pik-1 (1143 aa).

Positions 1–190 (MEAAAMAVTA…PLRIMGGEMQ (190 aa)) are structured coiled coil (CC) domain. The 70-residue stretch at 189-258 (MQKIVFKIPM…KVGHAELLQV (70 aa)) folds into the HMA domain. The segment at 191–264 (KIVFKIPMVD…LLQVSQVKED (74 aa)) is HMA-like domain. The 289-residue stretch at 282 to 570 (HEVKTICILG…WIAEGFVSEE (289 aa)) folds into the NB-ARC domain. 10 LRR repeats span residues 681–706 (FKRL…ICEQ), 708–731 (SLRV…MRKL), 732–754 (KHLE…IGEL), 756–777 (HLRI…IREL), 778–800 (QHLH…VGKL), 802–823 (NLKI…IGEL), 824–848 (NHLQ…QISQ), 945–968 (MPNL…INGT), 979–1002 (DSRL…EFKF), and 1004–1027 (AGPA…VFRC).

Belongs to the disease resistance NB-LRR family. Interacts with AVR-Pik through its N-terminal part containing the HMA-like domain.

In terms of biological role, disease resistance (R) protein that specifically recognizes the AVR-Pik effector avirulence protein from M.oryzae. Resistance proteins guard the plant against pathogens that contain an appropriate avirulence protein via an indirect interaction with this avirulence protein. That triggers a defense system including the hypersensitive response, which restricts the pathogen growth. Contribution of Pik-2 is required to recognize the effector avirulence protein AVR-Pik. This chain is Disease resistance protein Pik-1, found in Oryza sativa subsp. japonica (Rice).